The sequence spans 277 residues: Undecaprenyl-diphosphatase (277 aa).

The next 6 helical transmembrane spans lie at 47 to 67 (FNIIIQLAAILAVVWEFRGKI), 85 to 105 (VNLLIAFFPAVILGVLFADLI), 108 to 128 (WLFNPITVALALVVGGVIMLW), 183 to 203 (AATEFSFFLAMPTMVGAAVYS), 218 to 238 (VFAVGFVTSFVFAMVAVRALL), and 249 to 269 (FAWYRIAFGLLILATWQFHLI).

Belongs to the UppP family.

The protein localises to the cell inner membrane. It catalyses the reaction di-trans,octa-cis-undecaprenyl diphosphate + H2O = di-trans,octa-cis-undecaprenyl phosphate + phosphate + H(+). Its function is as follows. Catalyzes the dephosphorylation of undecaprenyl diphosphate (UPP). Confers resistance to bacitracin. The polypeptide is Undecaprenyl-diphosphatase (Pseudomonas paraeruginosa (strain DSM 24068 / PA7) (Pseudomonas aeruginosa (strain PA7))).